The sequence spans 89 residues: Gibberellin-regulated protein 10 (89 aa).

The signal sequence occupies residues 1–25; it reads MKFPAVKVLIISLLITSSLFILSTA.

The protein belongs to the GASA family. Post-translationally, six disulfide bonds may be present. In terms of tissue distribution, expressed in vasculature of rosette leaves and roots, cotyledon and root tips and developing seeds.

The protein resides in the secreted. Its function is as follows. Gibberellin-regulated protein that may function in hormonal controlled steps of development such as seed germination, flowering and seed maturation. This is Gibberellin-regulated protein 10 (GASA10) from Arabidopsis thaliana (Mouse-ear cress).